The following is a 62-amino-acid chain: DNA-directed RNA polymerase subunit Rpo10 (62 aa).

Zn(2+)-binding residues include cysteine 6, cysteine 9, cysteine 43, and cysteine 44.

The protein belongs to the archaeal Rpo10/eukaryotic RPB10 RNA polymerase subunit family. As to quaternary structure, part of the RNA polymerase complex. Requires Zn(2+) as cofactor.

The protein resides in the cytoplasm. The catalysed reaction is RNA(n) + a ribonucleoside 5'-triphosphate = RNA(n+1) + diphosphate. DNA-dependent RNA polymerase (RNAP) catalyzes the transcription of DNA into RNA using the four ribonucleoside triphosphates as substrates. The protein is DNA-directed RNA polymerase subunit Rpo10 of Methanosphaerula palustris (strain ATCC BAA-1556 / DSM 19958 / E1-9c).